Consider the following 30-residue polypeptide: Phospholipase A2 acanmyotoxin-2 (30 aa).

2 residues coordinate Ca(2+): tyrosine 28 and glycine 30.

It depends on Ca(2+) as a cofactor. Post-translationally, contains seven disulfide bonds. In terms of tissue distribution, expressed by the venom gland.

It is found in the secreted. The catalysed reaction is a 1,2-diacyl-sn-glycero-3-phosphocholine + H2O = a 1-acyl-sn-glycero-3-phosphocholine + a fatty acid + H(+). Its function is as follows. Snake venom phospholipase A2 (PLA2) that has myotoxic activity but no significant neurotoxicity. PLA2 catalyzes the calcium-dependent hydrolysis of the 2-acyl groups in 3-sn-phosphoglycerides. The sequence is that of Phospholipase A2 acanmyotoxin-2 from Acanthophis sp. (strain Seram) (Seram death adder).